The primary structure comprises 303 residues: N-acetyl-D-glucosamine kinase (303 aa).

Residues 4–11 and 133–140 contribute to the ATP site; these read GFDIGGTK and GVGGGLIF. Zn(2+) contacts are provided by His-157, Cys-177, Cys-179, and Cys-184.

It belongs to the ROK (NagC/XylR) family. NagK subfamily.

It catalyses the reaction N-acetyl-D-glucosamine + ATP = N-acetyl-D-glucosamine 6-phosphate + ADP + H(+). It functions in the pathway cell wall biogenesis; peptidoglycan recycling. In terms of biological role, catalyzes the phosphorylation of N-acetyl-D-glucosamine (GlcNAc) derived from cell-wall degradation, yielding GlcNAc-6-P. This chain is N-acetyl-D-glucosamine kinase, found in Escherichia coli O7:K1 (strain IAI39 / ExPEC).